The following is a 1165-amino-acid chain: Valine--tRNA ligase (1165 aa).

Residues 43 to 53 carry the 'HIGH' region motif; it reads PNVTGSLHMGH. The short motif at 800 to 804 is the 'KMSKS' region element; sequence KMSKT. ATP is bound at residue Lys-803. Coiled coils occupy residues 1001-1032 and 1097-1165; these read KNED…SDLQ and HVDL…VLRS.

It belongs to the class-I aminoacyl-tRNA synthetase family. ValS type 1 subfamily. In terms of assembly, monomer.

The protein resides in the cytoplasm. The catalysed reaction is tRNA(Val) + L-valine + ATP = L-valyl-tRNA(Val) + AMP + diphosphate. Its function is as follows. Catalyzes the attachment of valine to tRNA(Val). As ValRS can inadvertently accommodate and process structurally similar amino acids such as threonine, to avoid such errors, it has a 'posttransfer' editing activity that hydrolyzes mischarged Thr-tRNA(Val) in a tRNA-dependent manner. In Aquifex aeolicus (strain VF5), this protein is Valine--tRNA ligase.